Here is a 450-residue protein sequence, read N- to C-terminus: UPF0210 protein CPF_1748 (450 aa).

The protein belongs to the UPF0210 family. In terms of assembly, homodimer.

This is UPF0210 protein CPF_1748 from Clostridium perfringens (strain ATCC 13124 / DSM 756 / JCM 1290 / NCIMB 6125 / NCTC 8237 / Type A).